The following is a 339-amino-acid chain: Ketol-acid reductoisomerase (NADP(+)) (339 aa).

The KARI N-terminal Rossmann domain occupies 1–182 (MRVYYDRDAD…GGGRAGVIET (182 aa)). Residues 24 to 27 (YGSQ), arginine 48, serine 51, threonine 53, and 83 to 86 (DELQ) each bind NADP(+). Histidine 108 is an active-site residue. Glycine 134 contributes to the NADP(+) binding site. Residues 183 to 328 (TFKEECETDL…KKLRSMMPWI (146 aa)) enclose the KARI C-terminal knotted domain. Mg(2+) contacts are provided by aspartate 191, glutamate 195, glutamate 227, and glutamate 231. Residue serine 252 coordinates substrate.

The protein belongs to the ketol-acid reductoisomerase family. It depends on Mg(2+) as a cofactor.

It catalyses the reaction (2R)-2,3-dihydroxy-3-methylbutanoate + NADP(+) = (2S)-2-acetolactate + NADPH + H(+). It carries out the reaction (2R,3R)-2,3-dihydroxy-3-methylpentanoate + NADP(+) = (S)-2-ethyl-2-hydroxy-3-oxobutanoate + NADPH + H(+). It functions in the pathway amino-acid biosynthesis; L-isoleucine biosynthesis; L-isoleucine from 2-oxobutanoate: step 2/4. It participates in amino-acid biosynthesis; L-valine biosynthesis; L-valine from pyruvate: step 2/4. In terms of biological role, involved in the biosynthesis of branched-chain amino acids (BCAA). Catalyzes an alkyl-migration followed by a ketol-acid reduction of (S)-2-acetolactate (S2AL) to yield (R)-2,3-dihydroxy-isovalerate. In the isomerase reaction, S2AL is rearranged via a Mg-dependent methyl migration to produce 3-hydroxy-3-methyl-2-ketobutyrate (HMKB). In the reductase reaction, this 2-ketoacid undergoes a metal-dependent reduction by NADPH to yield (R)-2,3-dihydroxy-isovalerate. In Bartonella tribocorum (strain CIP 105476 / IBS 506), this protein is Ketol-acid reductoisomerase (NADP(+)).